A 242-amino-acid chain; its full sequence is Small ribosomal subunit protein uS2 (242 aa).

Belongs to the universal ribosomal protein uS2 family.

The sequence is that of Small ribosomal subunit protein uS2 from Vibrio vulnificus (strain CMCP6).